The following is a 371-amino-acid chain: Peptide chain release factor 2 (371 aa).

Glutamine 253 bears the N5-methylglutamine mark.

This sequence belongs to the prokaryotic/mitochondrial release factor family. Methylated by PrmC. Methylation increases the termination efficiency of RF2.

It is found in the cytoplasm. In terms of biological role, peptide chain release factor 2 directs the termination of translation in response to the peptide chain termination codons UGA and UAA. In Mycobacterium sp. (strain KMS), this protein is Peptide chain release factor 2.